The chain runs to 152 residues: Synaptobrevin (152 aa).

Polar residues predominate over residues 1 to 16 (MENNEAPSPSGSNNND). The tract at residues 1–30 (MENNEAPSPSGSNNNDFPILPPPPNANDNY) is disordered. At 1-110 (MENNEAPSPS…KRKQWWANMK (110 aa)) the chain is on the cytoplasmic side. The 61-residue stretch at 47 to 107 (KLQQTQAKVD…GKLKRKQWWA (61 aa)) folds into the v-SNARE coiled-coil homology domain. A helical; Anchor for type IV membrane protein membrane pass occupies residues 111–130 (MMIILGVIAVVLLIIVLVSV). Residues 131–152 (WPSSSDSGSGGGNKAITQAPPH) are Vesicular-facing. Residues 133-152 (SSSDSGSGGGNKAITQAPPH) are disordered.

Belongs to the synaptobrevin family. Part of the SNARE core complex containing Snap25 and syntaxin. In terms of processing, ubiquitinated by gzl, regulating endocytic trafficking. In wing imaginal disks, ubiquitination by gzl promotes transcytosis of wingless (wg) to the basolateral surface. In terms of tissue distribution, not nervous system-specific; abundant in cells of the gut and Malpighian tubules.

The protein localises to the cytoplasmic vesicle. The protein resides in the secretory vesicle. It is found in the synaptic vesicle membrane. It localises to the cell membrane. Involved in the targeting and/or fusion of transport vesicles to their target membrane. This chain is Synaptobrevin, found in Drosophila melanogaster (Fruit fly).